The following is a 450-amino-acid chain: Phosphoglucosamine mutase (450 aa).

Catalysis depends on S101, which acts as the Phosphoserine intermediate. S101, D241, D243, and D245 together coordinate Mg(2+). S101 carries the phosphoserine modification.

This sequence belongs to the phosphohexose mutase family. Mg(2+) is required as a cofactor. Activated by phosphorylation.

The catalysed reaction is alpha-D-glucosamine 1-phosphate = D-glucosamine 6-phosphate. Its function is as follows. Catalyzes the conversion of glucosamine-6-phosphate to glucosamine-1-phosphate. The sequence is that of Phosphoglucosamine mutase from Listeria monocytogenes serotype 4b (strain F2365).